Here is a 409-residue protein sequence, read N- to C-terminus: Elongation factor Tu (409 aa).

Residues 10-214 (KPHVNVGTIG…AVDSYIPTPE (205 aa)) enclose the tr-type G domain. The segment at 19–26 (GHVDHGKT) is G1. 19–26 (GHVDHGKT) provides a ligand contact to GTP. Threonine 26 serves as a coordination point for Mg(2+). The interval 60–64 (GITIN) is G2. Residues 81–84 (DCPG) form a G3 region. GTP contacts are provided by residues 81–85 (DCPGH) and 136–139 (NKAD). Residues 136–139 (NKAD) form a G4 region. Residues 174 to 176 (SAL) form a G5 region.

It belongs to the TRAFAC class translation factor GTPase superfamily. Classic translation factor GTPase family. EF-Tu/EF-1A subfamily. As to quaternary structure, monomer.

Its subcellular location is the cytoplasm. It carries out the reaction GTP + H2O = GDP + phosphate + H(+). In terms of biological role, GTP hydrolase that promotes the GTP-dependent binding of aminoacyl-tRNA to the A-site of ribosomes during protein biosynthesis. This Synechococcus sp. (strain JA-2-3B'a(2-13)) (Cyanobacteria bacterium Yellowstone B-Prime) protein is Elongation factor Tu.